A 237-amino-acid polypeptide reads, in one-letter code: Uridylate kinase (237 aa).

11 to 14 contributes to the ATP binding site; it reads KLSG. Gly53 provides a ligand contact to UMP. ATP is bound by residues Gly54 and Arg58. Residues Asp73 and 134–141 contribute to the UMP site; that span reads TGNPFFTT. Residues Thr161, Tyr167, and Asp170 each coordinate ATP.

This sequence belongs to the UMP kinase family. As to quaternary structure, homohexamer.

It localises to the cytoplasm. It catalyses the reaction UMP + ATP = UDP + ADP. Its pathway is pyrimidine metabolism; CTP biosynthesis via de novo pathway; UDP from UMP (UMPK route): step 1/1. Inhibited by UTP. Catalyzes the reversible phosphorylation of UMP to UDP. The chain is Uridylate kinase from Paraburkholderia xenovorans (strain LB400).